The primary structure comprises 340 residues: Guanine nucleotide-binding protein subunit beta-1 (340 aa).

Ser29 is modified (phosphoserine). 7 WD repeats span residues Gly53–Ala92, Leu95–Arg134, Gly141–Ser179, Gly182–Thr221, Gly224–Met263, Asn268–Ile307, and Gly310–Asn340.

It belongs to the WD repeat G protein beta family. G proteins are composed of 3 units, alpha, beta and gamma. In terms of tissue distribution, expressed in the brain neuropil and cortex, and the thoracic ganglion (at protein level). Expression detected in eye at protein level but not at mRNA level, suggesting cross reactivity of antibodies to the similar Gbeta76C protein.

Guanine nucleotide-binding proteins (G proteins) are involved as a modulator or transducer in various transmembrane signaling systems. The beta and gamma chains are required for the GTPase activity, for replacement of GDP by GTP, and for G protein-effector interaction. This Drosophila melanogaster (Fruit fly) protein is Guanine nucleotide-binding protein subunit beta-1 (Gbeta13F).